The sequence spans 512 residues: Threonine synthase (512 aa).

An N6-(pyridoxal phosphate)lysine modification is found at K121. Pyridoxal 5'-phosphate-binding residues include G273, N274, F275, D277, and T445.

The protein belongs to the threonine synthase family. Requires pyridoxal 5'-phosphate as cofactor.

The catalysed reaction is O-phospho-L-homoserine + H2O = L-threonine + phosphate. Its pathway is amino-acid biosynthesis; L-threonine biosynthesis; L-threonine from L-aspartate: step 5/5. Catalyzes the gamma-elimination of phosphate from L-phosphohomoserine and the beta-addition of water to produce L-threonine. This chain is Threonine synthase (THR4), found in Eremothecium gossypii (strain ATCC 10895 / CBS 109.51 / FGSC 9923 / NRRL Y-1056) (Yeast).